Consider the following 202-residue polypeptide: Amelogenin (202 aa).

Phosphoserine is present on S16. Residues 77–202 (QPAPPQQPVM…TDKTKREEVD (126 aa)) form a disordered region. Positions 78 to 87 (PAPPQQPVMP) are enriched in pro residues. A compositionally biased stretch (low complexity) spans 101–112 (QPNLPQPGQQPY). The span at 113-125 (QPQPAQQPQPHQP) shows a compositional bias: pro residues. Residues 126–158 (IQPIQPIQPIQPMQPMQPMQPMQPMQPMQPQTP) show a composition bias toward low complexity. Residues 164–176 (PLPPQPPLPPMFP) are compositionally biased toward pro residues.

Belongs to the amelogenin family.

It localises to the secreted. It is found in the extracellular space. Its subcellular location is the extracellular matrix. In terms of biological role, plays a role in the biomineralization of teeth. Seems to regulate the formation of crystallites during the secretory stage of tooth enamel development. Thought to play a major role in the structural organization and mineralization of developing enamel. This is Amelogenin (AMEL) from Monodelphis domestica (Gray short-tailed opossum).